We begin with the raw amino-acid sequence, 158 residues long: Transcription elongation factor GreA (158 aa).

It belongs to the GreA/GreB family.

In terms of biological role, necessary for efficient RNA polymerase transcription elongation past template-encoded arresting sites. The arresting sites in DNA have the property of trapping a certain fraction of elongating RNA polymerases that pass through, resulting in locked ternary complexes. Cleavage of the nascent transcript by cleavage factors such as GreA or GreB allows the resumption of elongation from the new 3'terminus. GreA releases sequences of 2 to 3 nucleotides. This Psychrobacter arcticus (strain DSM 17307 / VKM B-2377 / 273-4) protein is Transcription elongation factor GreA.